A 227-amino-acid chain; its full sequence is UPF0758 protein Pcryo_2119 (227 aa).

The 123-residue stretch at 102 to 224 folds into the MPN domain; the sequence is GLGRSQMVKD…TLSYAENSLP (123 aa). Residues histidine 173, histidine 175, and aspartate 186 each contribute to the Zn(2+) site. Residues 173 to 186 carry the JAMM motif motif; sequence HNHPHTDAKPSTAD.

The protein belongs to the UPF0758 family.

This chain is UPF0758 protein Pcryo_2119, found in Psychrobacter cryohalolentis (strain ATCC BAA-1226 / DSM 17306 / VKM B-2378 / K5).